We begin with the raw amino-acid sequence, 199 residues long: Large ribosomal subunit protein bL9 (199 aa).

Residues alanine 149–aspartate 166 are compositionally biased toward basic and acidic residues. Residues alanine 149–glutamine 199 are disordered. Residues phenylalanine 181 to glutamate 191 are compositionally biased toward acidic residues.

The protein belongs to the bacterial ribosomal protein bL9 family.

Its function is as follows. Binds to the 23S rRNA. In Afipia carboxidovorans (strain ATCC 49405 / DSM 1227 / KCTC 32145 / OM5) (Oligotropha carboxidovorans), this protein is Large ribosomal subunit protein bL9.